The chain runs to 195 residues: Interferon tau-5 (195 aa).

A signal peptide spans 1 to 23 (MAFVLSLLMALVLVSYGPGGSLG). Cystine bridges form between Cys-24–Cys-122 and Cys-52–Cys-162.

It belongs to the alpha/beta interferon family. IFN-alphaII subfamily. Constitutively and exclusively expressed in the mononuclear cells of the extraembryonic trophectoderm.

It is found in the secreted. Paracrine hormone primarily responsible for maternal recognition of pregnancy. Interacts with endometrial receptors, probably type I interferon receptors, and blocks estrogen receptor expression, preventing the estrogen-induced increase in oxytocin receptor expression in the endometrium. This results in the suppression of the pulsatile endometrial release of the luteolytic hormone prostaglandin F2-alpha, hindering the regression of the corpus luteum (luteolysis) and therefore a return to ovarian cyclicity. This, and a possible direct effect of IFN-tau on prostaglandin synthesis, leads in turn to continued ovarian progesterone secretion, which stimulates the secretion by the endometrium of the nutrients required for the growth of the conceptus. In summary, displays particularly high antiviral and antiproliferative potency concurrently with particular weak cytotoxicity, high antiluteolytic activity and immunomodulatory properties. In contrast with other IFNs, IFN-tau is not virally inducible. The protein is Interferon tau-5 (IFNT5) of Ovis aries (Sheep).